We begin with the raw amino-acid sequence, 138 residues long: Acidic phospholipase A2 Tbo-E6 (138 aa).

The N-terminal stretch at 1 to 16 is a signal peptide; that stretch reads MRTLWILAVLLLGVKG. Disulfide bonds link cysteine 42-cysteine 131, cysteine 44-cysteine 60, cysteine 59-cysteine 111, cysteine 65-cysteine 138, cysteine 66-cysteine 104, cysteine 73-cysteine 97, and cysteine 91-cysteine 102. Ca(2+) contacts are provided by tyrosine 43, glycine 45, and glycine 47. Histidine 63 is an active-site residue. Ca(2+) is bound at residue aspartate 64. Aspartate 105 is an active-site residue.

In terms of assembly, monomer. Ca(2+) serves as cofactor. As to expression, expressed by the venom gland.

The protein resides in the secreted. It carries out the reaction a 1,2-diacyl-sn-glycero-3-phosphocholine + H2O = a 1-acyl-sn-glycero-3-phosphocholine + a fatty acid + H(+). Functionally, snake venom phospholipase A2 (PLA2) that impairs hemostasis. It weakly inhibits ADP-induced platelet aggregation when tested on platelet rich plasma from human and rabbit blood (15-25% of inhibition at 5-10 ug of enzyme), and dose-dependently inhibits blood coagulation, possibly by inhibiting thrombin activation. Exhibits high hydrolytic activities toward L-dipalmitoyl phosphatidylcholine. PLA2 catalyzes the calcium-dependent hydrolysis of the 2-acyl groups in 3-sn-phosphoglycerides. The protein is Acidic phospholipase A2 Tbo-E6 of Craspedocephalus borneensis (Borneo pit viper).